The following is a 609-amino-acid chain: DNA mismatch repair protein MutL (609 aa).

It belongs to the DNA mismatch repair MutL/HexB family.

Its function is as follows. This protein is involved in the repair of mismatches in DNA. It is required for dam-dependent methyl-directed DNA mismatch repair. May act as a 'molecular matchmaker', a protein that promotes the formation of a stable complex between two or more DNA-binding proteins in an ATP-dependent manner without itself being part of a final effector complex. The protein is DNA mismatch repair protein MutL of Rickettsia felis (strain ATCC VR-1525 / URRWXCal2) (Rickettsia azadi).